The sequence spans 235 residues: Small ribosomal subunit protein uS3 (235 aa).

The KH type-2 domain occupies 39–107 (IREILHKELK…DVVINIVEIR (69 aa)). Residues 215–235 (QDKRMAESDGGGSSRPRRDAA) form a disordered region.

It belongs to the universal ribosomal protein uS3 family. Part of the 30S ribosomal subunit. Forms a tight complex with proteins S10 and S14.

Binds the lower part of the 30S subunit head. Binds mRNA in the 70S ribosome, positioning it for translation. The protein is Small ribosomal subunit protein uS3 of Rhodopseudomonas palustris (strain TIE-1).